The chain runs to 435 residues: Tol-Pal system protein TolB (435 aa).

The signal sequence occupies residues 1 to 20 (MRKIIAGVFIFVFLISNLYA).

It belongs to the TolB family. As to quaternary structure, the Tol-Pal system is composed of five core proteins: the inner membrane proteins TolA, TolQ and TolR, the periplasmic protein TolB and the outer membrane protein Pal. They form a network linking the inner and outer membranes and the peptidoglycan layer.

The protein resides in the periplasm. Part of the Tol-Pal system, which plays a role in outer membrane invagination during cell division and is important for maintaining outer membrane integrity. The chain is Tol-Pal system protein TolB from Francisella tularensis subsp. mediasiatica (strain FSC147).